We begin with the raw amino-acid sequence, 536 residues long: Beta-hexosaminidase subunit beta (536 aa).

The N-terminal stretch at methionine 1–leucine 31 is a signal peptide. N-linked (GlcNAc...) asparagine glycosylation occurs at asparagine 63. A disulfide bridge links cysteine 70 with cysteine 116. Asparagine 169 and asparagine 306 each carry an N-linked (GlcNAc...) asparagine glycan. Intrachain disulfides connect cysteine 288–cysteine 339 and cysteine 513–cysteine 530. The Proton donor role is filled by glutamate 334.

It belongs to the glycosyl hydrolase 20 family. In terms of assembly, there are 3 forms of beta-hexosaminidase: hexosaminidase A is a heterodimer composed of one subunit alpha and one subunit beta (chain A and B); hexosaminidase B is a homodimer of two beta subunits (two chains A and B); hexosaminidase S is a homodimer of two alpha subunits. The composition of the dimer (isozyme A versus isozyme S) has a significant effect on the substrate specificity of the alpha subunit active site.

It is found in the lysosome. It localises to the cytoplasmic vesicle. The protein localises to the secretory vesicle. Its subcellular location is the cortical granule. It catalyses the reaction Hydrolysis of terminal non-reducing N-acetyl-D-hexosamine residues in N-acetyl-beta-D-hexosaminides.. The catalysed reaction is N-acetyl-beta-D-galactosaminyl-(1-&gt;4)-beta-D-3-sulfogalactosyl-(1-&gt;4)-beta-D-glucosyl-(1&lt;-&gt;1')-ceramide + H2O = a beta-D-3-sulfogalactosyl-(1-&gt;4)-beta-D-glucosyl-(1&lt;-&gt;1')-ceramide + N-acetyl-beta-D-galactosamine. The enzyme catalyses a ganglioside GM2 (d18:1(4E)) + H2O = a ganglioside GM3 (d18:1(4E)) + N-acetyl-beta-D-galactosamine. It carries out the reaction a ganglioside GM2 + H2O = a ganglioside GM3 + N-acetyl-beta-D-galactosamine. It catalyses the reaction beta-D-GalNAc-(1-&gt;4)-alpha-L-IdoA-(1-&gt;3)-beta-D-GalNAc-4-sulfate-(1-&gt;4)-alpha-L-IdoA-(1-&gt;3)-D-GalNAc-4-sulfate + H2O = alpha-L-IdoA-(1-&gt;3)-beta-D-GalNAc-4-sulfate-(1-&gt;4)-alpha-L-IdoA-(1-&gt;3)-D-GalNAc-4-sulfate + N-acetyl-D-galactosamine. The catalysed reaction is N-acetyl-beta-D-6-sulfogalactosaminyl-(1-&gt;4)-alpha-L-iduronyl-(1-&gt;3)-N-acetyl-D-6-sulfogalactosamine + H2O = alpha-L-iduronyl-(1-&gt;3)-N-acetyl-D-6-sulfogalactosamine + N-acetyl-D-6-sulfogalactosamine. With respect to regulation, addition of GM2A stimulates the hydrolysis of sulfated glycosphingolipid SM2 and the ganglioside GM2. In terms of biological role, hydrolyzes the non-reducing end N-acetyl-D-hexosamine and/or sulfated N-acetyl-D-hexosamine of glycoconjugates, such as the oligosaccharide moieties from proteins and neutral glycolipids, or from certain mucopolysaccharides. The isozyme B does not hydrolyze each of these substrates, however hydrolyzes efficiently neutral oligosaccharide. Only the isozyme A is responsible for the degradation of GM2 gangliosides in the presence of GM2A. During fertilization is responsible, at least in part, for the zona block to polyspermy. Present in the cortical granules of non-activated oocytes, is exocytosed during the cortical reaction in response to oocyte activation and inactivates the sperm galactosyltransferase-binding site, accounting for the block in sperm binding to the zona pellucida. The sequence is that of Beta-hexosaminidase subunit beta from Mus musculus (Mouse).